The chain runs to 421 residues: 3-phosphoshikimate 1-carboxyvinyltransferase (421 aa).

Lysine 19, serine 20, and arginine 24 together coordinate 3-phosphoshikimate. Lysine 19 provides a ligand contact to phosphoenolpyruvate. Phosphoenolpyruvate-binding residues include glycine 88 and arginine 116. Serine 160, glutamine 162, aspartate 307, and lysine 334 together coordinate 3-phosphoshikimate. A phosphoenolpyruvate-binding site is contributed by glutamine 162. The active-site Proton acceptor is aspartate 307. Residues arginine 338 and arginine 380 each contribute to the phosphoenolpyruvate site.

It belongs to the EPSP synthase family. In terms of assembly, monomer.

Its subcellular location is the cytoplasm. The catalysed reaction is 3-phosphoshikimate + phosphoenolpyruvate = 5-O-(1-carboxyvinyl)-3-phosphoshikimate + phosphate. The protein operates within metabolic intermediate biosynthesis; chorismate biosynthesis; chorismate from D-erythrose 4-phosphate and phosphoenolpyruvate: step 6/7. Catalyzes the transfer of the enolpyruvyl moiety of phosphoenolpyruvate (PEP) to the 5-hydroxyl of shikimate-3-phosphate (S3P) to produce enolpyruvyl shikimate-3-phosphate and inorganic phosphate. The protein is 3-phosphoshikimate 1-carboxyvinyltransferase of Thermotoga neapolitana (strain ATCC 49049 / DSM 4359 / NBRC 107923 / NS-E).